The following is a 535-amino-acid chain: Peptide chain release factor 3 (535 aa).

Positions Ala8 to Arg278 constitute a tr-type G domain. GTP-binding positions include Ser17–Thr24, Asp85–His89, and Asn139–Asp142.

This sequence belongs to the TRAFAC class translation factor GTPase superfamily. Classic translation factor GTPase family. PrfC subfamily.

The protein resides in the cytoplasm. In terms of biological role, increases the formation of ribosomal termination complexes and stimulates activities of RF-1 and RF-2. It binds guanine nucleotides and has strong preference for UGA stop codons. It may interact directly with the ribosome. The stimulation of RF-1 and RF-2 is significantly reduced by GTP and GDP, but not by GMP. The protein is Peptide chain release factor 3 of Bordetella bronchiseptica (strain ATCC BAA-588 / NCTC 13252 / RB50) (Alcaligenes bronchisepticus).